Reading from the N-terminus, the 282-residue chain is Elongation factor Ts (282 aa).

An involved in Mg(2+) ion dislocation from EF-Tu region spans residues 80–83; that stretch reads TDFV.

This sequence belongs to the EF-Ts family.

It is found in the cytoplasm. Its function is as follows. Associates with the EF-Tu.GDP complex and induces the exchange of GDP to GTP. It remains bound to the aminoacyl-tRNA.EF-Tu.GTP complex up to the GTP hydrolysis stage on the ribosome. This is Elongation factor Ts (tsf) from Chlamydia pneumoniae (Chlamydophila pneumoniae).